A 225-amino-acid polypeptide reads, in one-letter code: NAD(P)H-quinone oxidoreductase subunit K, chloroplastic (225 aa).

[4Fe-4S] cluster contacts are provided by Cys-43, Cys-44, Cys-108, and Cys-139.

Belongs to the complex I 20 kDa subunit family. NDH is composed of at least 16 different subunits, 5 of which are encoded in the nucleus. [4Fe-4S] cluster serves as cofactor.

It localises to the plastid. It is found in the chloroplast thylakoid membrane. The enzyme catalyses a plastoquinone + NADH + (n+1) H(+)(in) = a plastoquinol + NAD(+) + n H(+)(out). It catalyses the reaction a plastoquinone + NADPH + (n+1) H(+)(in) = a plastoquinol + NADP(+) + n H(+)(out). In terms of biological role, NDH shuttles electrons from NAD(P)H:plastoquinone, via FMN and iron-sulfur (Fe-S) centers, to quinones in the photosynthetic chain and possibly in a chloroplast respiratory chain. The immediate electron acceptor for the enzyme in this species is believed to be plastoquinone. Couples the redox reaction to proton translocation, and thus conserves the redox energy in a proton gradient. This Oryza nivara (Indian wild rice) protein is NAD(P)H-quinone oxidoreductase subunit K, chloroplastic.